Here is a 408-residue protein sequence, read N- to C-terminus: WD repeat-containing protein JIP5 (408 aa).

6 WD repeats span residues proline 5–asparagine 44, proline 50–isoleucine 86, aspartate 87–threonine 130, glutamine 133–valine 172, aspartate 177–valine 216, and glycine 221–valine 267. Residues valine 311 to leucine 408 are disordered. 2 stretches are compositionally biased toward acidic residues: residues serine 313–glutamate 339 and aspartate 356–glutamate 366. The segment covering lysine 396–leucine 408 has biased composition (basic and acidic residues).

It belongs to the WD repeat WDR55 family.

The protein resides in the nucleus. Its subcellular location is the nucleolus. This is WD repeat-containing protein JIP5 (JIP5) from Coprinopsis cinerea (strain Okayama-7 / 130 / ATCC MYA-4618 / FGSC 9003) (Inky cap fungus).